The primary structure comprises 132 residues: D-ribose pyranase (132 aa).

The active-site Proton donor is the H20. Residues D28, H99, and 121–123 each bind substrate; that span reads YSN.

This sequence belongs to the RbsD / FucU family. RbsD subfamily. As to quaternary structure, homodecamer.

The protein resides in the cytoplasm. The catalysed reaction is beta-D-ribopyranose = beta-D-ribofuranose. Its pathway is carbohydrate metabolism; D-ribose degradation; D-ribose 5-phosphate from beta-D-ribopyranose: step 1/2. Functionally, catalyzes the interconversion of beta-pyran and beta-furan forms of D-ribose. The polypeptide is D-ribose pyranase (Streptococcus uberis (strain ATCC BAA-854 / 0140J)).